Here is a 305-residue protein sequence, read N- to C-terminus: Probable lipid kinase YegS-like (305 aa).

The DAGKc domain occupies 1 to 129 (MTQRRAMLIL…VDLGEVGGKL (129 aa)). ATP is bound by residues Thr-39, 65–71 (GDGTLRD), and Thr-92. Leu-210, Asp-213, and Leu-215 together coordinate Mg(2+). Glu-268 (proton acceptor) is an active-site residue.

This sequence belongs to the diacylglycerol/lipid kinase family. YegS lipid kinase subfamily. Requires Mg(2+) as cofactor. The cofactor is Ca(2+).

It localises to the cytoplasm. Its function is as follows. Probably phosphorylates lipids; the in vivo substrate is unknown. This is Probable lipid kinase YegS-like from Pseudomonas syringae pv. syringae (strain B728a).